The primary structure comprises 733 residues: Polyribonucleotide nucleotidyltransferase (733 aa).

Mg(2+) is bound by residues Asp-488 and Asp-494. Residues Pro-555–Ile-614 enclose the KH domain. The region spanning Gly-624 to Lys-692 is the S1 motif domain. A compositionally biased stretch (basic and acidic residues) spans Glu-711–Ser-722. Residues Glu-711–Glu-733 are disordered. Residues Glu-723–Glu-733 show a composition bias toward basic residues.

Belongs to the polyribonucleotide nucleotidyltransferase family. Mg(2+) is required as a cofactor.

It localises to the cytoplasm. It carries out the reaction RNA(n+1) + phosphate = RNA(n) + a ribonucleoside 5'-diphosphate. Involved in mRNA degradation. Catalyzes the phosphorolysis of single-stranded polyribonucleotides processively in the 3'- to 5'-direction. The polypeptide is Polyribonucleotide nucleotidyltransferase (Bartonella henselae (strain ATCC 49882 / DSM 28221 / CCUG 30454 / Houston 1) (Rochalimaea henselae)).